The primary structure comprises 698 residues: eEF1A lysine and N-terminal methyltransferase (698 aa).

At methionine 1 the chain carries N-acetylmethionine. The residue at position 267 (serine 267) is a Phosphoserine. The interval 431-461 (KDTSHRAQKKRKKDRKKQRPADTSEDFPPAP) is disordered. Positions 436-448 (RAQKKRKKDRKKQ) are enriched in basic residues.

It belongs to the methyltransferase superfamily. As to quaternary structure, forms a tripartite complex containing GAB1, METTL13 and SPRY2. Within the complex interacts with GAB1 and SPRY2. Expressed in the inner ear (at protein level). Expression is detected in the cochlear duct, spiral limbus region, efferent and afferent nerves, and in spiral ganglion neurons (at protein level).

Its subcellular location is the cytoplasm. It localises to the nucleus. The protein localises to the mitochondrion. It carries out the reaction L-lysyl-[protein] + S-adenosyl-L-methionine = N(6)-methyl-L-lysyl-[protein] + S-adenosyl-L-homocysteine + H(+). It catalyses the reaction N(6)-methyl-L-lysyl-[protein] + S-adenosyl-L-methionine = N(6),N(6)-dimethyl-L-lysyl-[protein] + S-adenosyl-L-homocysteine + H(+). The catalysed reaction is N-terminal glycyl-L-lysyl-L-glutamyl-[protein] + 3 S-adenosyl-L-methionine = N-terminal N,N,N-trimethyl-glycyl-L-lysyl-L-glutamyl-[protein] + 3 S-adenosyl-L-homocysteine + 3 H(+). Its function is as follows. Dual methyltransferase that catalyzes methylation of elongation factor 1-alpha (EEF1A1 and EEF1A2) at two different positions, and is therefore involved in the regulation of mRNA translation. Via its C-terminus, methylates EEF1A1 and EEF1A2 at the N-terminal residue 'Gly-2'. Via its N-terminus dimethylates EEF1A1 and EEF1A2 at residue 'Lys-55'. Has no activity towards core histones H2A, H2B, H3 and H4. The sequence is that of eEF1A lysine and N-terminal methyltransferase from Mus musculus (Mouse).